A 915-amino-acid polypeptide reads, in one-letter code: Isoleucine--tRNA ligase (915 aa).

The 'HIGH' region motif lies at 58–68 (PYANGHLHIGH). Residue E568 participates in L-isoleucyl-5'-AMP binding. Positions 609–613 (KMSKS) match the 'KMSKS' region motif. K612 is a binding site for ATP. Zn(2+) contacts are provided by C892, C895, C907, and C910.

Belongs to the class-I aminoacyl-tRNA synthetase family. IleS type 1 subfamily. As to quaternary structure, monomer. It depends on Zn(2+) as a cofactor.

Its subcellular location is the cytoplasm. The catalysed reaction is tRNA(Ile) + L-isoleucine + ATP = L-isoleucyl-tRNA(Ile) + AMP + diphosphate. In terms of biological role, catalyzes the attachment of isoleucine to tRNA(Ile). As IleRS can inadvertently accommodate and process structurally similar amino acids such as valine, to avoid such errors it has two additional distinct tRNA(Ile)-dependent editing activities. One activity is designated as 'pretransfer' editing and involves the hydrolysis of activated Val-AMP. The other activity is designated 'posttransfer' editing and involves deacylation of mischarged Val-tRNA(Ile). The sequence is that of Isoleucine--tRNA ligase from Wolinella succinogenes (strain ATCC 29543 / DSM 1740 / CCUG 13145 / JCM 31913 / LMG 7466 / NCTC 11488 / FDC 602W) (Vibrio succinogenes).